The primary structure comprises 953 residues: Eukaryotic translation initiation factor 3 subunit A (953 aa).

The PCI domain occupies 323–504 (LQKMASHVLL…KSISFGLDLH (182 aa)). Coiled-coil stretches lie at residues 593-642 (QERE…KRQA), 670-704 (MNAD…VDYF), and 732-877 (ENQE…LEER). A disordered region spans residues 603-623 (IKKQKVENQEAEQKRLDEERR). Disordered regions lie at residues 810–861 (ERKK…EIDR) and 893–953 (GWGD…ITMS). Composition is skewed to basic and acidic residues over residues 812 to 861 (KKIE…EIDR), 895 to 919 (GDHE…RGGD), and 928 to 953 (WQRE…ITMS).

This sequence belongs to the eIF-3 subunit A family. Component of the eukaryotic translation initiation factor 3 (eIF-3) complex.

Its subcellular location is the cytoplasm. Functionally, RNA-binding component of the eukaryotic translation initiation factor 3 (eIF-3) complex, which is involved in protein synthesis of a specialized repertoire of mRNAs and, together with other initiation factors, stimulates binding of mRNA and methionyl-tRNAi to the 40S ribosome. The eIF-3 complex specifically targets and initiates translation of a subset of mRNAs involved in cell proliferation. The sequence is that of Eukaryotic translation initiation factor 3 subunit A from Nematostella vectensis (Starlet sea anemone).